Here is a 270-residue protein sequence, read N- to C-terminus: FKBP-type peptidyl-prolyl cis-trans isomerase FkpA (270 aa).

An N-terminal signal peptide occupies residues 1–25 (MKSLFKVTLLATTMAVALHAPITFA). The PPIase FKBP-type domain occupies 164–249 (SDTVVVNYKG…VFDVELLDVK (86 aa)).

It belongs to the FKBP-type PPIase family.

Its subcellular location is the periplasm. It catalyses the reaction [protein]-peptidylproline (omega=180) = [protein]-peptidylproline (omega=0). Functionally, PPIases accelerate the folding of proteins. It catalyzes the cis-trans isomerization of proline imidic peptide bonds in oligopeptides. This Escherichia coli O157:H7 protein is FKBP-type peptidyl-prolyl cis-trans isomerase FkpA (fkpA).